We begin with the raw amino-acid sequence, 336 residues long: Tyrosine recombinase XerC (336 aa).

Residues 14–106 (VANCRWLGEF…SVKSFYRFLL (93 aa)) form the Core-binding (CB) domain. Residues 127-330 (KIPDFLSEEE…TFNRLRDAYT (204 aa)) form the Tyr recombinase domain. Residues R183, K207, H282, R285, and H308 contribute to the active site. Y317 serves as the catalytic O-(3'-phospho-DNA)-tyrosine intermediate.

It belongs to the 'phage' integrase family. XerC subfamily. As to quaternary structure, forms a cyclic heterotetrameric complex composed of two molecules of XerC and two molecules of XerD.

The protein resides in the cytoplasm. In terms of biological role, site-specific tyrosine recombinase, which acts by catalyzing the cutting and rejoining of the recombining DNA molecules. The XerC-XerD complex is essential to convert dimers of the bacterial chromosome into monomers to permit their segregation at cell division. It also contributes to the segregational stability of plasmids. This is Tyrosine recombinase XerC from Chlorobaculum tepidum (strain ATCC 49652 / DSM 12025 / NBRC 103806 / TLS) (Chlorobium tepidum).